A 403-amino-acid chain; its full sequence is Argininosuccinate synthase (403 aa).

10–18 (AYSGGVDTS) contributes to the ATP binding site. Tyrosine 89 contacts L-citrulline. Glycine 119 contributes to the ATP binding site. 3 residues coordinate L-aspartate: threonine 121, asparagine 125, and aspartate 126. L-citrulline is bound at residue asparagine 125. L-citrulline is bound by residues arginine 129, serine 177, serine 186, glutamate 262, and tyrosine 274.

This sequence belongs to the argininosuccinate synthase family. Type 1 subfamily. As to quaternary structure, homotetramer.

Its subcellular location is the cytoplasm. The enzyme catalyses L-citrulline + L-aspartate + ATP = 2-(N(omega)-L-arginino)succinate + AMP + diphosphate + H(+). It functions in the pathway amino-acid biosynthesis; L-arginine biosynthesis; L-arginine from L-ornithine and carbamoyl phosphate: step 2/3. This Synechococcus sp. (strain JA-3-3Ab) (Cyanobacteria bacterium Yellowstone A-Prime) protein is Argininosuccinate synthase.